Here is a 102-residue protein sequence, read N- to C-terminus: NADH-quinone oxidoreductase subunit K (102 aa).

The next 3 membrane-spanning stretches (helical) occupy residues 6-26 (LEHG…GLMV), 30-50 (ILFV…AFVV), and 62-82 (VMFI…LAIL).

The protein belongs to the complex I subunit 4L family. NDH-1 is composed of 13 different subunits. Subunits NuoA, H, J, K, L, M, N constitute the membrane sector of the complex.

Its subcellular location is the cell inner membrane. The enzyme catalyses a quinone + NADH + 5 H(+)(in) = a quinol + NAD(+) + 4 H(+)(out). Functionally, NDH-1 shuttles electrons from NADH, via FMN and iron-sulfur (Fe-S) centers, to quinones in the respiratory chain. The immediate electron acceptor for the enzyme in this species is believed to be ubiquinone. Couples the redox reaction to proton translocation (for every two electrons transferred, four hydrogen ions are translocated across the cytoplasmic membrane), and thus conserves the redox energy in a proton gradient. The protein is NADH-quinone oxidoreductase subunit K of Pseudomonas aeruginosa (strain LESB58).